Here is a 70-residue protein sequence, read N- to C-terminus: Conotoxin Im23.3 (70 aa).

The signal sequence occupies residues 1-22 (MIMRMTLTLFVLVVMTAASASG). Residues 23 to 28 (DALTEA) constitute a propeptide that is removed on maturation. Disulfide bonds link Cys-34/Cys-41, Cys-45/Cys-53, and Cys-54/Cys-69.

The protein belongs to the conotoxin K superfamily. In terms of tissue distribution, expressed by the venom duct.

The protein localises to the secreted. Neurotoxin that induces excitatory symptoms in mice following intracranial administration. No symptoms are observed after intraperitoneal and intravenous (tail vein) injections. In Conus imperialis (Imperial cone), this protein is Conotoxin Im23.3.